The following is a 674-amino-acid chain: Carbon monoxide dehydrogenase/acetyl-CoA synthase subunit beta (674 aa).

The interval 1–25 (MPRFRDLSHNCRPSEAPRVMEPKNR) is disordered. The [4Fe-4S] cluster site is built by Cys59, Cys67, Cys68, Cys71, Cys76, and Cys90. 6 residues coordinate [Ni-4Fe-4S] cluster: His283, Cys317, Cys355, Cys470, Cys500, and Cys550.

Tetramer of two alpha and two beta chains. [Ni-Fe-S] cluster serves as cofactor. It depends on [4Fe-4S] cluster as a cofactor.

The enzyme catalyses CO + 2 oxidized [2Fe-2S]-[ferredoxin] + H2O = 2 reduced [2Fe-2S]-[ferredoxin] + CO2 + 2 H(+). In terms of biological role, the beta subunit (this protein) generates CO from CO(2), while the alpha subunit combines the CO with CoA and a methyl group to form acetyl-CoA. The methyl group, which is incorporated into acetyl-CoA, is transferred to the alpha subunit by a corrinoid iron-sulfur protein. The chain is Carbon monoxide dehydrogenase/acetyl-CoA synthase subunit beta from Moorella thermoacetica (Clostridium thermoaceticum).